Reading from the N-terminus, the 353-residue chain is N-acetyl-gamma-glutamyl-phosphate reductase (353 aa).

C155 is an active-site residue.

Belongs to the NAGSA dehydrogenase family. Type 1 subfamily.

It is found in the cytoplasm. The catalysed reaction is N-acetyl-L-glutamate 5-semialdehyde + phosphate + NADP(+) = N-acetyl-L-glutamyl 5-phosphate + NADPH + H(+). It functions in the pathway amino-acid biosynthesis; L-arginine biosynthesis; N(2)-acetyl-L-ornithine from L-glutamate: step 3/4. Functionally, catalyzes the NADPH-dependent reduction of N-acetyl-5-glutamyl phosphate to yield N-acetyl-L-glutamate 5-semialdehyde. The sequence is that of N-acetyl-gamma-glutamyl-phosphate reductase from Microcystis aeruginosa (strain NIES-843 / IAM M-2473).